We begin with the raw amino-acid sequence, 68 residues long: Small ribosomal subunit protein bS18c (68 aa).

The protein belongs to the bacterial ribosomal protein bS18 family. In terms of assembly, part of the 30S ribosomal subunit.

The protein resides in the plastid. Its subcellular location is the chloroplast. The polypeptide is Small ribosomal subunit protein bS18c (rps18) (Cyanidium caldarium (Red alga)).